Here is a 316-residue protein sequence, read N- to C-terminus: Uracil-DNA glycosylase (316 aa).

Positions 36–79 (AAAAAPAGAGAGASKPARPSAAARPAKGTPAASAATTATGADAS) are enriched in low complexity. The disordered stretch occupies residues 36-91 (AAAAAPAGAGAGASKPARPSAAARPAKGTPAASAATTATGADASAPPPDPGAPTWD). Asp-159 serves as the catalytic Proton acceptor.

It belongs to the uracil-DNA glycosylase (UDG) superfamily. UNG family.

Its subcellular location is the host nucleus. It catalyses the reaction Hydrolyzes single-stranded DNA or mismatched double-stranded DNA and polynucleotides, releasing free uracil.. In terms of biological role, excises uracil residues from the DNA which can arise as a result of misincorporation of dUMP residues by DNA polymerase or deamination of cytosines. Therefore may reduce deleterious uracil incorporation into the viral genome, particularly in terminally differentiated cells which lack DNA repair enzymes. The chain is Uracil-DNA glycosylase (UL2) from Sus scrofa (Pig).